A 137-amino-acid chain; its full sequence is ATP synthase epsilon chain (137 aa).

This sequence belongs to the ATPase epsilon chain family. As to quaternary structure, F-type ATPases have 2 components, CF(1) - the catalytic core - and CF(0) - the membrane proton channel. CF(1) has five subunits: alpha(3), beta(3), gamma(1), delta(1), epsilon(1). CF(0) has three main subunits: a, b and c.

It is found in the cell inner membrane. Functionally, produces ATP from ADP in the presence of a proton gradient across the membrane. This Magnetococcus marinus (strain ATCC BAA-1437 / JCM 17883 / MC-1) protein is ATP synthase epsilon chain.